A 174-amino-acid polypeptide reads, in one-letter code: Transcription factor bHLH168 (174 aa).

The bHLH domain occupies S14 to L63.

It belongs to the bHLH protein family.

It localises to the nucleus. The sequence is that of Transcription factor bHLH168 from Arabidopsis thaliana (Mouse-ear cress).